Reading from the N-terminus, the 100-residue chain is Aspartyl/glutamyl-tRNA(Asn/Gln) amidotransferase subunit C (100 aa).

Belongs to the GatC family. Heterotrimer of A, B and C subunits.

The enzyme catalyses L-glutamyl-tRNA(Gln) + L-glutamine + ATP + H2O = L-glutaminyl-tRNA(Gln) + L-glutamate + ADP + phosphate + H(+). It carries out the reaction L-aspartyl-tRNA(Asn) + L-glutamine + ATP + H2O = L-asparaginyl-tRNA(Asn) + L-glutamate + ADP + phosphate + 2 H(+). Its function is as follows. Allows the formation of correctly charged Asn-tRNA(Asn) or Gln-tRNA(Gln) through the transamidation of misacylated Asp-tRNA(Asn) or Glu-tRNA(Gln) in organisms which lack either or both of asparaginyl-tRNA or glutaminyl-tRNA synthetases. The reaction takes place in the presence of glutamine and ATP through an activated phospho-Asp-tRNA(Asn) or phospho-Glu-tRNA(Gln). This is Aspartyl/glutamyl-tRNA(Asn/Gln) amidotransferase subunit C from Streptococcus pneumoniae (strain P1031).